The sequence spans 689 residues: MTERNFLIELGTEELPPKALRTLAEAFSSNFEAELKTAALVHQGIEWFATPRRLALKVTALATGQADSVVEKRGPAISAAFDAEGNPTKAAQGWARGNGITVEQADTLKTEKGEWLLYKQEVKGKPAQELLSGLAAAALAKLPIPKPMRWGNNEIQFIRPVKTLTMLLGDELIEGNILGADSARIIRGHRFMGEAEFTIDNADQYPAILEERGKVMANYEARKAIILEGAKKAALEVGGIADLEDELVEEVTSLVEWPVVLTASFEENFLNVPTEALVYTMKGDQKYFPVYDAEGNLIPKFIFVTNIESKDPRQIIEGNEKVVRPRLADAEFFFKTDRKRPLVDRLPELEKAIFQKQLGTIKDKTDRITELAGYIAEQIGADVTNAKRAGLLAKCDLMTSMVFEFTDTQGVMGMHYARHDGEAEDVALALYEQYMPRFAGDKLPSTGVSAAVAMADKIDTLVGIFGIGQAPKGSDPFALRRAALGVLRIIVEKDYSLDLVDLIAKARAQFGDKLTNANVEDEVIDFMLGRFRAWYQDEGHSVDVILAVLALRPTQPADFDKRVKAVSHFRSLDAAESLAAANKRVGNILAKFDGELPLAVDSSLLLEDAEKALAEKVEAMIATLAPVFAEGNYQQALSELATLREPVDAFFDNVMVMADDEKLKVNRLTMLNLLRNEFLKVADISLVQK.

It belongs to the class-II aminoacyl-tRNA synthetase family. In terms of assembly, tetramer of two alpha and two beta subunits.

The protein resides in the cytoplasm. It catalyses the reaction tRNA(Gly) + glycine + ATP = glycyl-tRNA(Gly) + AMP + diphosphate. This Photobacterium profundum (strain SS9) protein is Glycine--tRNA ligase beta subunit.